Reading from the N-terminus, the 464-residue chain is F-box/WD repeat-containing protein 12 (464 aa).

Residues 1 to 45 (MEIRLPDLALKRIFSFLDLFGLLQVSQVNKHWNRIADSDYLWRSL) form the F-box domain. WD repeat units lie at residues 89–132 (YKVT…CAWD), 136–174 (GTMIWSSPVQEFHFSNLVTLPQMHLAITMDRKKTIKVWN), 178–217 (RDALAVLPMPQPCYCMEAYLTKDGPFLMVGDAAGDIYTFT), 222–263 (RDVS…FLTE), 270–315 (EGSV…ITFD), 320–367 (KTGG…LLFS), 370–407 (GFLLQRFEDHQAAINNFWVDPCYVLTTSENSVHVYMWE), and 416–461 (RSCC…VMYS).

In terms of assembly, interacts with SKP1. Interacts with CUL1. Interacts with IL22RA1. As to expression, ubiquitously expressed.

It participates in protein modification; protein ubiquitination. Its function is as follows. Substrate-recognition component of the SCF (SKP1-CUL1-F-box protein)-type E3 ubiquitin ligase complex. Promotes degradation of interleukin-22 receptor subunit IL22RA1 in resting and IL22-stimulated conditions by facilitating its ubiquitination. Functions as a cell growth suppressor. This Homo sapiens (Human) protein is F-box/WD repeat-containing protein 12 (FBXW12).